The following is a 296-amino-acid chain: Probable lipid kinase YegS-like (296 aa).

Positions 1–130 constitute a DAGKc domain; that stretch reads MPHTLLILNG…IDLAQVNGEH (130 aa). ATP is bound by residues T37, 63-69, and T92; that span reads GDGTINE. Mg(2+) contacts are provided by L212, D215, and L217. Catalysis depends on E268, which acts as the Proton acceptor.

The protein belongs to the diacylglycerol/lipid kinase family. YegS lipid kinase subfamily. It depends on Mg(2+) as a cofactor. The cofactor is Ca(2+).

It localises to the cytoplasm. Its function is as follows. Probably phosphorylates lipids; the in vivo substrate is unknown. The polypeptide is Probable lipid kinase YegS-like (Yersinia pestis bv. Antiqua (strain Angola)).